Consider the following 64-residue polypeptide: Alpha-conotoxin SI (64 aa).

The signal sequence occupies residues methionine 1–serine 21. Positions phenylalanine 22–glutamate 49 are excised as a propeptide. The segment at proline 23 to arginine 47 is disordered. Positions arginine 26–arginine 47 are enriched in basic and acidic residues. Intrachain disulfides connect cysteine 51/cysteine 56 and cysteine 52/cysteine 62. Position 62 is a cysteine amide (cysteine 62).

The protein belongs to the conotoxin A superfamily. As to expression, expressed by the venom duct.

The protein resides in the secreted. Alpha-conotoxins act on postsynaptic membranes, they bind to the nicotinic acetylcholine receptors (nAChR) and thus inhibit them. Is active on muscle nAChR (IC(50)=113 nM on adult subtype (alpha-1-beta-1-gamma-delta/CHRNA1-CHRNB1-CHRNG-CHRND) and IC(50)=142 nM on fetal subtype (alpha-1-beta-1-delta-epsilon/CHRNA1-CHRNB1-CHRND-CHRNE)). On mice muscle receptors, its higher affinity site is the alpha/delta nAChR subunit interface. On Torpedo receptors, it does not distinguish between alpha/delta and alpha/gamma acetylcholine-binding sites. In vivo, causes paralysis followed by death when injected into goldfish. In contrast, has no effect on mice, when similar doses are intraperitoneally or intracerebrally injected. The polypeptide is Alpha-conotoxin SI (Conus striatus (Striated cone)).